A 314-amino-acid polypeptide reads, in one-letter code: Protein SPOROCYTELESS (314 aa).

Over residues 1–17 (MATSLFFMSTDQNSVGN) the composition is skewed to polar residues. Disordered stretches follow at residues 1–20 (MATSLFFMSTDQNSVGNPND) and 33–62 (GEIRTETLKSRGRKPGSKTGQQKQKKPTLR). Positions 62–70 (RGMGVAKLE) match the SPL motif. The EAR motif lies at 308–314 (IDLSLKL).

The protein belongs to the NOZZLE family. In terms of assembly, homodimer and heterodimer with SPEARs. Interacts in vitro with YAB1, YAB3 and YAB4. Interacts (via EAR motif) with TPL, TPR1, TPR2, TPR3 and TPR4. Interacts with SPEAR1, SPEAR2, SPEAR3, SPEAR4, TCP1, TCP6, TCP8, TCP9, TCP11, TCP15, TCP20, TCP21 and TCP23. Interacts with TCP2, TCP3, TCP4, TCP5, TCP10, TCP13, TCP17 and TCP24. Expressed in flower buds. Not found in leaves, siliques and stems. Detected in rosette leaves, stem tissue and seedlings.

The protein localises to the nucleus. Functionally, transcriptional regulator of sporocyte development. Acts as an adapter-like transcriptional repressor recruiting TPL/TPR corepressors to inhibit TCP transcription factors. Required for nucellus and embryo sac development. Plays a central role in patterning both the proximal-distal and the adaxial-abaxial axes during ovule development. Involved in establishing the prospective chalaza of the ovule and in controlling the cell number and the length of the funiculus, and is required for the development of the integuments. Required, with BEL1, for cytokinin-induced PIN1 expression in ovules. Involved in controlling stamen identity. May also regulate the morphology of lateral organs by repressing auxin production. This chain is Protein SPOROCYTELESS, found in Arabidopsis thaliana (Mouse-ear cress).